A 396-amino-acid polypeptide reads, in one-letter code: Fumarate--(S)-2,3-diaminopropanoate ligase (396 aa).

It carries out the reaction (S)-2,3-diaminopropanoate + fumarate + ATP = N(3)-fumaroyl-(S)-2,3-diaminopropanoate + AMP + diphosphate. It participates in antibiotic biosynthesis. Involved in dapdiamide antibiotics biosynthesis. Ligates fumarate and 2,3-diaminopropionate (DAP) to form N-beta-fumaroyl-DAP. Can also form N-succinoyl-DAP from succinate and DAP, with lower efficiency. The chain is Fumarate--(S)-2,3-diaminopropanoate ligase from Enterobacter agglomerans (Erwinia herbicola).